We begin with the raw amino-acid sequence, 493 residues long: Transcript termination protein A18 (493 aa).

The region spanning 100–256 (MIELKRPLYI…NSIINIAKLS (157 aa)) is the Helicase ATP-binding domain. 113–120 (LACGFGKT) provides a ligand contact to ATP. The DESH box motif lies at 206–209 (DESH). The 148-residue stretch at 309–456 (ILDTLVEEFK…IISLSVDKLG (148 aa)) folds into the Helicase C-terminal domain.

The protein belongs to the helicase family. Poxviruses subfamily. Interacts with G2. Might be part of a transcription complex composed at least of G2, A18, and H5.

It localises to the virion. Its function is as follows. DNA helicase which seems to act as a postreplicative transcription termination factor. Involved in ATP-dependent release of nascent RNA. Forms a stable complex with single-stranded DNA, and to a lesser extent RNA. This is Transcript termination protein A18 from Mus musculus (Mouse).